The chain runs to 346 residues: Fe(3+) ions import ATP-binding protein FbpC 2 (346 aa).

The ABC transporter domain maps to 2–234; that stretch reads LELHRVSKSF…PNSEDIATFL (233 aa). 34-41 contributes to the ATP binding site; it reads GPSGSGKT.

It belongs to the ABC transporter superfamily. Fe(3+) ion importer (TC 3.A.1.10) family. The complex is composed of two ATP-binding proteins (FbpC), two transmembrane proteins (FbpB) and a solute-binding protein (FbpA).

The protein resides in the cell inner membrane. The catalysed reaction is Fe(3+)(out) + ATP + H2O = Fe(3+)(in) + ADP + phosphate + H(+). Functionally, part of the ABC transporter complex FbpABC involved in Fe(3+) ions import. Responsible for energy coupling to the transport system. This Pectobacterium atrosepticum (strain SCRI 1043 / ATCC BAA-672) (Erwinia carotovora subsp. atroseptica) protein is Fe(3+) ions import ATP-binding protein FbpC 2.